Reading from the N-terminus, the 102-residue chain is Large ribosomal subunit protein bL21 (102 aa).

The protein belongs to the bacterial ribosomal protein bL21 family. As to quaternary structure, part of the 50S ribosomal subunit. Contacts protein L20.

Its function is as follows. This protein binds to 23S rRNA in the presence of protein L20. The chain is Large ribosomal subunit protein bL21 from Listeria monocytogenes serotype 4b (strain CLIP80459).